Consider the following 903-residue polypeptide: HTH-type transcriptional regulator MalT (903 aa).

Position 39–46 (39–46) interacts with ATP; the sequence is CPAGYGKT. Positions 832-897 constitute an HTH luxR-type domain; the sequence is ELIRTSPLTQ…EAVQQAQRLL (66 aa). A DNA-binding region (H-T-H motif) is located at residues 856–875; the sequence is NDQIANELDVAATTIKTHIR.

Belongs to the MalT family. In terms of assembly, monomer in solution. Oligomerizes to an active state in the presence of the positive effectors ATP and maltotriose.

Its activity is regulated as follows. Activated by ATP and maltotriose, which are both required for DNA binding. In terms of biological role, positively regulates the transcription of the maltose regulon whose gene products are responsible for uptake and catabolism of malto-oligosaccharides. Specifically binds to the promoter region of its target genes, recognizing a short DNA motif called the MalT box. The sequence is that of HTH-type transcriptional regulator MalT from Yersinia pseudotuberculosis serotype O:1b (strain IP 31758).